A 196-amino-acid chain; its full sequence is Large ribosomal subunit protein bL25 (196 aa).

Belongs to the bacterial ribosomal protein bL25 family. CTC subfamily. As to quaternary structure, part of the 50S ribosomal subunit; part of the 5S rRNA/L5/L18/L25 subcomplex. Contacts the 5S rRNA. Binds to the 5S rRNA independently of L5 and L18.

In terms of biological role, this is one of the proteins that binds to the 5S RNA in the ribosome where it forms part of the central protuberance. This chain is Large ribosomal subunit protein bL25, found in Bacteroides fragilis (strain ATCC 25285 / DSM 2151 / CCUG 4856 / JCM 11019 / LMG 10263 / NCTC 9343 / Onslow / VPI 2553 / EN-2).